The chain runs to 211 residues: Chaperone protein TorD (211 aa).

It belongs to the TorD/DmsD family. TorD subfamily.

It localises to the cytoplasm. Functionally, involved in the biogenesis of TorA. Acts on TorA before the insertion of the molybdenum cofactor and, as a result, probably favors a conformation of the apoenzyme that is competent for acquiring the cofactor. The protein is Chaperone protein TorD of Shewanella loihica (strain ATCC BAA-1088 / PV-4).